Consider the following 245-residue polypeptide: Glutathione S-transferase F4 (245 aa).

In terms of domain architecture, GST N-terminal spans 25–106; it reads AGYKVHGDPF…YIAYVHSSRG (82 aa). Glutathione is bound by residues 35–36, 64–65, 77–78, and 90–91; these read ST, HK, QV, and ES. In terms of domain architecture, GST C-terminal spans 114 to 244; it reads SHETMATLTM…QEKSWFNKPR (131 aa).

It belongs to the GST superfamily. Phi family.

Its subcellular location is the cytoplasm. It is found in the cytosol. The enzyme catalyses RX + glutathione = an S-substituted glutathione + a halide anion + H(+). May be involved in the conjugation of reduced glutathione to a wide number of exogenous and endogenous hydrophobic electrophiles and have a detoxification role against certain herbicides. The sequence is that of Glutathione S-transferase F4 (GSTF4) from Arabidopsis thaliana (Mouse-ear cress).